The sequence spans 317 residues: Melanocyte-stimulating hormone receptor (317 aa).

Over 1–37 (MPMQGAQRKLLGSLNSTPTATSNLGLAANHTGAPCLE) the chain is Extracellular. N-linked (GlcNAc...) asparagine glycosylation occurs at N29. A helical transmembrane segment spans residues 38–63 (VSIPDGLFLSLGLVSLVENVLVVAAI). Residues 64-72 (AKNRNLHSS) are Cytoplasmic-facing. Residues 73–93 (MYCFICCLALSDLLVSGSNML) traverse the membrane as a helical segment. Residues 94–118 (ETAVILLLEAGALATRTSAVQRLHN) lie on the Extracellular side of the membrane. A helical membrane pass occupies residues 119–140 (TIDVLTCSSMLCSLCFLGAIAV). Over 141–163 (DRYISIFYALRYHSIVTLPRTQR) the chain is Cytoplasmic. Residues 164–183 (VIAAIWVASVLSSTLFITYY) traverse the membrane as a helical segment. Topologically, residues 184-191 (DHAAVLLC) are extracellular. The helical transmembrane segment at 192 to 211 (LVVFFLAMLVLMAVLYVHML) threads the bilayer. Residues 212-240 (ARACQHAHGIIRLHKRQSPAHQGFGLRGA) lie on the Cytoplasmic side of the membrane. A helical membrane pass occupies residues 241–266 (ATLTILLGIFFLCWGPFFLHLTLVVF). At 267 to 279 (CPQHLTCSCIFKN) the chain is on the extracellular side. The helical transmembrane segment at 280-300 (FKVFLTLIICNTIIDPLIYAF) threads the bilayer. The Cytoplasmic portion of the chain corresponds to 301 to 317 (RSQELRRTLKEVLLCSW). C315 is lipidated: S-palmitoyl cysteine.

This sequence belongs to the G-protein coupled receptor 1 family. As to quaternary structure, interacts with MGRN1, but does not undergo MGRN1-mediated ubiquitination; this interaction competes with GNAS-binding and thus inhibits agonist-induced cAMP production. Interacts with OPN3; the interaction results in a decrease in MC1R-mediated cAMP signaling and ultimately a decrease in melanin production in melanocytes.

The protein localises to the cell membrane. Receptor for MSH (alpha, beta and gamma) and ACTH. The activity of this receptor is mediated by G proteins which activate adenylate cyclase. Mediates melanogenesis, the production of eumelanin (black/brown) and phaeomelanin (red/yellow), via regulation of cAMP signaling in melanocytes. This Saguinus imperator (Emperor tamarin) protein is Melanocyte-stimulating hormone receptor (MC1R).